The sequence spans 123 residues: NADH-quinone oxidoreductase subunit A (123 aa).

3 consecutive transmembrane segments (helical) span residues 11–31, 68–88, and 93–113; these read YLPIAIFFGIAVLLSVLIMIL, LVAILFIIFDLEIAFLVPWAI, and IGKMGFFSMMFFLFVLIIGFI.

Belongs to the complex I subunit 3 family. In terms of assembly, NDH-1 is composed of 14 different subunits. Subunits NuoA, H, J, K, L, M, N constitute the membrane sector of the complex.

The protein resides in the cell inner membrane. It catalyses the reaction a quinone + NADH + 5 H(+)(in) = a quinol + NAD(+) + 4 H(+)(out). NDH-1 shuttles electrons from NADH, via FMN and iron-sulfur (Fe-S) centers, to quinones in the respiratory chain. The immediate electron acceptor for the enzyme in this species is believed to be ubiquinone. Couples the redox reaction to proton translocation (for every two electrons transferred, four hydrogen ions are translocated across the cytoplasmic membrane), and thus conserves the redox energy in a proton gradient. This chain is NADH-quinone oxidoreductase subunit A, found in Rickettsia prowazekii (strain Madrid E).